We begin with the raw amino-acid sequence, 175 residues long: Probable RNA-binding protein EIF1AD (175 aa).

An S1-like domain is found at 5-89 (TKKRYITNKV…VKGEIEYILD (85 aa)). Residues 116–128 (EAKRGQTSDKMID) show a composition bias toward basic and acidic residues. Residues 116–175 (EAKRGQTSDKMIDDDMLPPSESEEEDESEGEETYDEDDVDDEEEEEFDTYNPNRMQAPSK) form a disordered region. Positions 129–163 (DDMLPPSESEEEDESEGEETYDEDDVDDEEEEEFD) are enriched in acidic residues. The segment covering 165–175 (YNPNRMQAPSK) has biased composition (polar residues).

Belongs to the EIF1AD family.

The sequence is that of Probable RNA-binding protein EIF1AD from Caenorhabditis elegans.